Reading from the N-terminus, the 651-residue chain is MFVARRLSKNITQISKTAVKTSVRAVPVRGFKTTSVNQAAAPAPKTSQEKEYFEKNKSLLDKESNEESTEVDYSKLNENQGVVHQVIGAVVDVYFPHGKLPYINDALIVDDFQAENVEKVIEDLNNPSLKGKIDFNNVPISNIKLVLEVAQHLGDGIVRCVALDITDGLGRGALVLNTGSPLMVPVGQATLGRIMNVIGEPIDGCGPIPATEKRPIWRAPPPFADLAPSASILETGIKVIDLLAPYSRGGKIGLFGGAGVGKTVLIQELINNIAKAHGGFSVFTGVGERTREGNDLYHEMVEAGVIKKEGPGSKVALVFGQMNEPPGARARVTLTGLTVAEYFRDAEGQDVLLFIDNIFRFTQAGSEMSALLGRIPSAVGYQPTLATDMGCMQERIATTKKGSITSVQAVYVPADDLTDPAPATTFAHLDATTVLSRAISELGIYPCVDPLDSTSLMMDPNIIGVEHYKVATDVQKILQEYKSLQDIIAILGMDDLSEDQKATVFRARKIQRFLSQPFEVAHAFTNMEGRFVKLSDSIKAFKGILEGKYDHLPEAAFYMVGGIEDVEIKAAKLLESAGKEEKKTTTTSTTGQVKEETVREKVTRLVDEAYNAKVKKLKEYGASTAHLEELRAQYEKNFESEISQLEVLLKK.

The transit peptide at Met1–Gly30 directs the protein to the mitochondrion. The ADP site is built by Gly259, Val260, Gly261, Lys262, Thr263, and Val264. Gly259 contributes to the ATP binding site. Gly259, Val260, Gly261, Lys262, and Thr263 together coordinate phosphate. Positions 261, 262, 263, and 264 each coordinate ATP. A Mg(2+)-binding site is contributed by Thr263. A Mg(2+)-binding site is contributed by Glu288. Arg289 is a binding site for ATP.

The protein belongs to the ATPase alpha/beta chains family. In terms of assembly, homotrimer. Component of the ATP synthase complex composed at least of ATP5F1A/subunit alpha, ATP5F1B/subunit beta, ATP5MC1/subunit c (homooctomer), MT-ATP6/subunit a, MT-ATP8/subunit 8, ATP5ME/subunit e, ATP5MF/subunit f, ATP5MG/subunit g, ATP5MK/subunit k, ATP5MJ/subunit j, ATP5F1C/subunit gamma, ATP5F1D/subunit delta, ATP5F1E/subunit epsilon, ATP5PF/subunit F6, ATP5PB/subunit b, ATP5PD/subunit d, ATP5PO/subunit OSCP. ATP synthase complex consists of a soluble F(1) head domain (subunits alpha(3) and beta(3)) - the catalytic core - and a membrane F(0) domain - the membrane proton channel (subunits c, a, 8, e, f, g, k and j). These two domains are linked by a central stalk (subunits gamma, delta, and epsilon) rotating inside the F1 region and a stationary peripheral stalk (subunits F6, b, d, and OSCP).

Its subcellular location is the mitochondrion inner membrane. The enzyme catalyses ATP + H2O + 4 H(+)(in) = ADP + phosphate + 5 H(+)(out). Functionally, catalytic subunit beta, of the mitochondrial membrane ATP synthase complex (F(1)F(0) ATP synthase or Complex V) that produces ATP from ADP in the presence of a proton gradient across the membrane which is generated by electron transport complexes of the respiratory chain. ATP synthase complex consist of a soluble F(1) head domain - the catalytic core - and a membrane F(1) domain - the membrane proton channel. These two domains are linked by a central stalk rotating inside the F(1) region and a stationary peripheral stalk. During catalysis, ATP synthesis in the catalytic domain of F(1) is coupled via a rotary mechanism of the central stalk subunits to proton translocation. In vivo, can only synthesize ATP although its ATP hydrolase activity can be activated artificially in vitro. With the subunit alpha (ATP5F1A), forms the catalytic core in the F(1) domain. In Dictyostelium discoideum (Social amoeba), this protein is ATP synthase F(1) complex catalytic subunit beta, mitochondrial.